Reading from the N-terminus, the 552-residue chain is Arginine--tRNA ligase (552 aa).

Positions 129 to 139 (ANPTGPVTLAS) match the 'HIGH' region motif.

It belongs to the class-I aminoacyl-tRNA synthetase family. Monomer.

The protein localises to the cytoplasm. It carries out the reaction tRNA(Arg) + L-arginine + ATP = L-arginyl-tRNA(Arg) + AMP + diphosphate. This chain is Arginine--tRNA ligase, found in Frankia alni (strain DSM 45986 / CECT 9034 / ACN14a).